Consider the following 203-residue polypeptide: MGALKYVEEIQKKKQSDVIRFLLRVRCWELRQLNAIHRASRPSRPDKARRLGYKAKQGYVVYRIRVRRGGRKRPAPKGATYGKPTNMGINQLKYQRALRATAEERVGRRCANLRVLNSYWINQDSTYKYFEVILVDPQHKAIRRDARINWICNAVHKHREARGLTATGKKSRGINKGHRYNNTRSGRRHTWKRQNTQSYWRYR.

The interval 166–203 is disordered; the sequence is ATGKKSRGINKGHRYNNTRSGRRHTWKRQNTQSYWRYR. Basic residues predominate over residues 169–192; it reads KKSRGINKGHRYNNTRSGRRHTWK. A compositionally biased stretch (polar residues) spans 193–203; sequence RQNTQSYWRYR.

It belongs to the eukaryotic ribosomal protein eL15 family.

The chain is Large ribosomal subunit protein eL15 (rpl15) from Aspergillus niger.